The following is a 796-amino-acid chain: Armadillo repeat-containing protein wrm-1 (796 aa).

Positions 17 to 59 (NFNPMTPSTSRVSTPVRPSSTMSARQYSGSPFKAQPQNMEPSN) are disordered. An ARM repeat occupies 462 to 504 (ESIHCIVQLIGCSDVTIVELATGTLRNIGLHNKMNKAFMVQDG).

In terms of assembly, interacts (independently of ARM repeat) with nhr-25. Component of the beta-catenin-lit-1 complex (also called the lit-1/wrm-1 complex or the wrm-1/lit-1 kinase complex) at least composed of lit-1 and wrm-1. Interacts (via N-terminus) with lit-1; the interaction is direct and activates lit-1 kinase activity which leads to the phosphorylation of pop-1. This promotes pop-1 interaction with par-5 and translocation of pop-1 from the nucleus to the cytoplasm.

The protein resides in the cytoplasm. Its subcellular location is the cell cortex. It is found in the nucleus. Functionally, antagonistic role in the Wnt signaling pathway that operates in embryogenesis. When located at the cortex it has been shown to inhibit Wnt signaling during asymmetric cell division but when relocated to the nucleus it shows positive regulation. Has a role in blastomere signaling during endoderm specification. Component of the beta-catenin-lit-1 complex which promotes phosphorylation, down-regulation and subcellular relocation of pop-1. Within the complex, activates lit-1-dependent kinase activity. Can substitute for bar-1 indicating functional redundancy. Appears to have a role in centrosome positioning and can activation transcription in yeast. Involved in the development of distal tip cells (DTC) by regulating the asymmetric distribution of cye-1 and cki-1 between the daughters of Z1.a and Z4.p cells. This is Armadillo repeat-containing protein wrm-1 from Caenorhabditis elegans.